Consider the following 214-residue polypeptide: Pyridoxine/pyridoxamine 5'-phosphate oxidase (214 aa).

Substrate is bound by residues 9–12 and Lys-67; that span reads RREY. Residues 62–67, 77–78, Arg-83, Lys-84, and Gln-106 contribute to the FMN site; these read RTVLLK and YS. Residues Tyr-124, Arg-128, and Ser-132 each coordinate substrate. Residues 141-142 and Trp-186 each bind FMN; that span reads QS. A substrate-binding site is contributed by 192 to 194; it reads RLH. FMN is bound at residue Arg-196.

The protein belongs to the pyridoxamine 5'-phosphate oxidase family. In terms of assembly, homodimer. It depends on FMN as a cofactor.

It catalyses the reaction pyridoxamine 5'-phosphate + O2 + H2O = pyridoxal 5'-phosphate + H2O2 + NH4(+). The catalysed reaction is pyridoxine 5'-phosphate + O2 = pyridoxal 5'-phosphate + H2O2. Its pathway is cofactor metabolism; pyridoxal 5'-phosphate salvage; pyridoxal 5'-phosphate from pyridoxamine 5'-phosphate: step 1/1. The protein operates within cofactor metabolism; pyridoxal 5'-phosphate salvage; pyridoxal 5'-phosphate from pyridoxine 5'-phosphate: step 1/1. Catalyzes the oxidation of either pyridoxine 5'-phosphate (PNP) or pyridoxamine 5'-phosphate (PMP) into pyridoxal 5'-phosphate (PLP). In Porphyromonas gingivalis (strain ATCC BAA-308 / W83), this protein is Pyridoxine/pyridoxamine 5'-phosphate oxidase.